The sequence spans 610 residues: UvrABC system protein C (610 aa).

The 79-residue stretch at 16–94 folds into the GIY-YIG domain; it reads SQPGVYRMYD…IKLYQPRYNV (79 aa). One can recognise a UVR domain in the interval 204-239; it reads QQVLTRLIERMEQASQQLKFEDAARYRDQIQAVRQV.

This sequence belongs to the UvrC family. As to quaternary structure, interacts with UvrB in an incision complex.

It localises to the cytoplasm. Functionally, the UvrABC repair system catalyzes the recognition and processing of DNA lesions. UvrC both incises the 5' and 3' sides of the lesion. The N-terminal half is responsible for the 3' incision and the C-terminal half is responsible for the 5' incision. The polypeptide is UvrABC system protein C (Photorhabdus laumondii subsp. laumondii (strain DSM 15139 / CIP 105565 / TT01) (Photorhabdus luminescens subsp. laumondii)).